Consider the following 268-residue polypeptide: AN1-type zinc finger protein 1 (268 aa).

Position 2 is an N-acetylalanine (Ala-2). AN1-type zinc fingers lie at residues 4–52 (LDIG…VVKE) and 58–106 (EHKS…VAKP). Residues Cys-10, Cys-15, Cys-25, Cys-28, Cys-33, His-36, His-42, Cys-44, Cys-64, Cys-69, Cys-79, Cys-82, Cys-87, His-90, His-96, and Cys-98 each coordinate Zn(2+). The segment at 160–260 (QTERTYFQVY…EYLNDEEQFL (101 aa)) is ubiquitin-like.

As to quaternary structure, associates with the 26S proteasome; this association occurs upon exposure to arsenite and is reduced in the presence of ATP. Interacts (via AN1-type 1 and 2 zinc fingers) with PSMD1; this interaction is increased upon arsenite treatment and occurs in an ATP-independent manner. Interacts with PSMC4. Interacts with PSMA1. Interacts (via its ubiquitin-like region) with VCP; this interaction occurs in an arsenite-dependent manner and is necessary for the recruitment of the ubiquitin-selective ATPase VCP to stress granules (SGs).

Its subcellular location is the cytoplasm. It localises to the stress granule. Functionally, plays a role in the regulation of cytoplasmic stress granules (SGs) turnover. SGs are dynamic and transient cytoplasmic ribonucleoprotein assemblies important for cellular protein homeostasis when protein production is suspended after acute exogenous stress. Associates with SGs and is involved in the efficient and specific arsenite-induced clearance process of SGs through the recruitment of the ubiquitin-selective ATPase VCP and the 26S proteasome. This process requires both complexes for efficient degradation of damaged ubiquitinated SG proteins during recovery from arsenite stress, and hence avoiding aberrant cytoplasmic SGs degradation via autophagy. The polypeptide is AN1-type zinc finger protein 1 (Mus musculus (Mouse)).